The sequence spans 297 residues: E3 ubiquitin-protein ligase TRIM52 (297 aa).

An RING-type; degenerate zinc finger spans residues Cys-20–Glu-62. An important for rapid proteolytic degradation by the proteasome region spans residues Val-72 to Pro-167. A B box-type zinc finger spans residues Asn-222–Leu-263. Zn(2+) contacts are provided by Cys-227, His-230, Cys-249, and His-255.

It belongs to the TRIM/RBCC family. In terms of assembly, (Microbial infection) Interacts with Japanese encephalitis virus non-structural protein 2 (NS2A); mediates the ubiquitination of NS2A, targeting it for proteasome-mediated degradation. In terms of processing, autoubiquitinated. Polyubiquitinated. Undergoes extremely rapid proteolytic degradation by the proteasome.

The protein localises to the cytoplasm. It is found in the cytosol. Its subcellular location is the nucleus. The catalysed reaction is S-ubiquitinyl-[E2 ubiquitin-conjugating enzyme]-L-cysteine + [acceptor protein]-L-lysine = [E2 ubiquitin-conjugating enzyme]-L-cysteine + N(6)-ubiquitinyl-[acceptor protein]-L-lysine.. It participates in protein modification; protein ubiquitination. Functionally, E3 ubiquitin-protein ligase. Positively regulates the NF-kappa-B signaling pathway. (Microbial infection) Exhibits antiviral activity against Japanese encephalitis virus (JEV). Ubiquitinates the viral non-structural protein 2 (NS2A) and targets it for proteasome-mediated degradation. This is E3 ubiquitin-protein ligase TRIM52 (TRIM52) from Homo sapiens (Human).